We begin with the raw amino-acid sequence, 292 residues long: 4-hydroxy-tetrahydrodipicolinate synthase (292 aa).

T45 provides a ligand contact to pyruvate. Y133 (proton donor/acceptor) is an active-site residue. The active-site Schiff-base intermediate with substrate is K161. I203 contributes to the pyruvate binding site.

This sequence belongs to the DapA family. In terms of assembly, homotetramer; dimer of dimers.

It is found in the cytoplasm. The enzyme catalyses L-aspartate 4-semialdehyde + pyruvate = (2S,4S)-4-hydroxy-2,3,4,5-tetrahydrodipicolinate + H2O + H(+). Its pathway is amino-acid biosynthesis; L-lysine biosynthesis via DAP pathway; (S)-tetrahydrodipicolinate from L-aspartate: step 3/4. Catalyzes the condensation of (S)-aspartate-beta-semialdehyde [(S)-ASA] and pyruvate to 4-hydroxy-tetrahydrodipicolinate (HTPA). In Shigella boydii serotype 18 (strain CDC 3083-94 / BS512), this protein is 4-hydroxy-tetrahydrodipicolinate synthase.